The following is a 399-amino-acid chain: Beta-1,6-galactosyltransferase GALT31A (399 aa).

The Cytoplasmic portion of the chain corresponds to 1-12 (MGMGRYQKSATS). Residues 13–35 (GVSARWVFVLCISSFLLGVLVVN) form a helical; Signal-anchor for type II membrane protein membrane-spanning segment. Over 36–399 (RLLASFETVD…GDGAIWHSSF (364 aa)) the chain is Lumenal.

Belongs to the glycosyltransferase 31 family. Interacts with GALT29A. Mn(2+) is required as a cofactor.

The protein localises to the golgi apparatus membrane. It participates in protein modification; protein glycosylation. Its function is as follows. Beta-galactosyltransferase involved in elongation of beta-1,6-linked galactan side chains on arabinogalactan proteins. Required for the progression of embryogenesis beyond the globular stage. Beta-galactosyltransferase involved in the biosynthesis of type II arabinogalactan. Transfers galactose from UDP-galactose to a mixture of various oligosaccharides derived from arabinogalactan proteins. Forms a complex with GALT29A that can work cooperatively to enhance the activities of adding galactose residues at O6 positions to beta-1,6-linked galactan and beta-1,3-linked galactan. This chain is Beta-1,6-galactosyltransferase GALT31A, found in Arabidopsis thaliana (Mouse-ear cress).